A 239-amino-acid polypeptide reads, in one-letter code: Uridylate kinase (239 aa).

12 to 15 (KLSG) contacts ATP. An involved in allosteric activation by GTP region spans residues 20-25 (GDQGYG). Glycine 54 lines the UMP pocket. ATP contacts are provided by glycine 55 and arginine 59. UMP is bound by residues aspartate 74 and 135 to 142 (TGNPYFTT). Positions 162, 168, and 171 each coordinate ATP.

The protein belongs to the UMP kinase family. Homohexamer.

Its subcellular location is the cytoplasm. The catalysed reaction is UMP + ATP = UDP + ADP. Its pathway is pyrimidine metabolism; CTP biosynthesis via de novo pathway; UDP from UMP (UMPK route): step 1/1. With respect to regulation, allosterically activated by GTP. Inhibited by UTP. Its function is as follows. Catalyzes the reversible phosphorylation of UMP to UDP. The protein is Uridylate kinase of Geobacter metallireducens (strain ATCC 53774 / DSM 7210 / GS-15).